A 489-amino-acid polypeptide reads, in one-letter code: Glycogen synthase (489 aa).

Arg-20 contacts ADP-alpha-D-glucose.

Belongs to the glycosyltransferase 1 family. Bacterial/plant glycogen synthase subfamily.

The catalysed reaction is [(1-&gt;4)-alpha-D-glucosyl](n) + ADP-alpha-D-glucose = [(1-&gt;4)-alpha-D-glucosyl](n+1) + ADP + H(+). It functions in the pathway glycan biosynthesis; glycogen biosynthesis. Functionally, synthesizes alpha-1,4-glucan chains using ADP-glucose. This Chlorobium phaeovibrioides (strain DSM 265 / 1930) (Prosthecochloris vibrioformis (strain DSM 265)) protein is Glycogen synthase.